Reading from the N-terminus, the 198-residue chain is Nucleoid occlusion factor SlmA (198 aa).

The HTH tetR-type domain occupies 9 to 70; it reads RNRREEILQA…SLIEFIEDSL (62 aa). The segment at residues 33–52 is a DNA-binding region (H-T-H motif); that stretch reads TTAKLAANVGVSEAALYRHF. Residues 113 to 144 are a coiled coil; it reads ALMFEQDRLQDRINQLFERIESQLRQVLREHK.

The protein belongs to the nucleoid occlusion factor SlmA family. In terms of assembly, homodimer. Interacts with FtsZ.

It is found in the cytoplasm. Its subcellular location is the nucleoid. Required for nucleoid occlusion (NO) phenomenon, which prevents Z-ring formation and cell division over the nucleoid. Acts as a DNA-associated cell division inhibitor that binds simultaneously chromosomal DNA and FtsZ, and disrupts the assembly of FtsZ polymers. SlmA-DNA-binding sequences (SBS) are dispersed on non-Ter regions of the chromosome, preventing FtsZ polymerization at these regions. This chain is Nucleoid occlusion factor SlmA, found in Pectobacterium carotovorum subsp. carotovorum (strain PC1).